We begin with the raw amino-acid sequence, 268 residues long: Dioscorin DB3S (268 aa).

The 235-residue stretch at 25-259 (DEFSYIEGNP…TNFRSVFYFE (235 aa)) folds into the Alpha-carbonic anhydrase domain. Residues C50 and C209 are joined by a disulfide bond. H91 acts as the Proton acceptor in catalysis. Residues D92, 117-119 (HFH), Q136, and 205-206 (TA) each bind L-ascorbate.

The protein belongs to the alpha-class carbonic anhydrase family. In terms of assembly, monomer. Homodimer. Post-translationally, not glycosylated. Expressed in tuber (at protein level).

It carries out the reaction hydrogencarbonate + H(+) = CO2 + H2O. It catalyses the reaction 2 monodehydro-L-ascorbate radical + NADH + H(+) = 2 L-ascorbate + NAD(+). Storage protein of tuber. Involved in protection against oxidative stress. Has carbonate dehydratase and weak trypsin inhibitor activity detected by measuring the dehydration of sodium bicarbonate and the inhibition of trypsin-catalyzed hydrolysis of N-benzoyl-L-arginine-4-nitro anilide, respectively. Contrarily, no carbonate dehydratase or trypsin inhibitor activity detected by measuring the hydrolysis of 4-nitrophenyl acetate or the inhibition of bovine trypsin-catalyzed hydrolysis of N-benzoyl-L-arginine ethyl ester, respectively. Has dehydroascorbate (DHA) reductase and monodehydroascorbate (MDA) reductase activities. Catalyzes the reactions of carbonate dehydratase and DHA reductase independently of zinc and glutathione (GSH). The coupled reaction is capable of recycling a plant antioxidant ascorbate using ubiquitous compounds H(2)O and CO(2). Exhibits antioxidant activity. Able to scavenge 1,1-diphenyl-2-picrylhydrazyl (DPPH) radical and hydroxyl radicals. Exhibits immunomodulatory activity. Activates Toll-like receptor 4 signaling pathways by up-regulating the gene expression of pro-inflammatory cytokines, such as tumor necrosis factor alpha, interleukin-1 beta and interleukin-6, and chemokines RANTES and MCP-1, in mouse RAW 264.7 macrophages. Stimulates the phagocytosis of E.coli by the LPS-treated mouse macrophages. This is Dioscorin DB3S from Dioscorea polystachya (Chinese yam).